Reading from the N-terminus, the 1204-residue chain is ATP-dependent helicase/nuclease subunit A (1204 aa).

Positions 2-469 (TKFTKEQNQA…IVLSDNFRST (468 aa)) constitute a UvrD-like helicase ATP-binding domain. ATP is bound at residue 23–30 (ASAGSGKT). In terms of domain architecture, UvrD-like helicase C-terminal spans 496 to 784 (EGQLQFGATY…KLMTIHASKG (289 aa)).

This sequence belongs to the helicase family. AddA subfamily. Heterodimer of AddA and AddB/RexB. The cofactor is Mg(2+).

The enzyme catalyses Couples ATP hydrolysis with the unwinding of duplex DNA by translocating in the 3'-5' direction.. It carries out the reaction ATP + H2O = ADP + phosphate + H(+). In terms of biological role, the heterodimer acts as both an ATP-dependent DNA helicase and an ATP-dependent, dual-direction single-stranded exonuclease. Recognizes the chi site generating a DNA molecule suitable for the initiation of homologous recombination. The AddA nuclease domain is required for chi fragment generation; this subunit has the helicase and 3' -&gt; 5' nuclease activities. The sequence is that of ATP-dependent helicase/nuclease subunit A from Lactobacillus johnsonii (strain CNCM I-12250 / La1 / NCC 533).